Reading from the N-terminus, the 209-residue chain is MAIERYFIKEGVKEMLIDEYLEKELRRAGYGGIDIKKTPLGTKVIIFAASPGYVIGRGGRRIRELTRILERQFGLENPQIEVEEIKNPYLNAKVQAVRLAQALERGIHFRRAAYSAIRAIMRNGARGVEIRLSGKLTGERAKSVRFYQGYLAKVGNPAETLVSKGYAQALLKLGVIGVKVAIMPPDARLPDEIEVKEIVEEEVSGNEAQ.

The region spanning 17–86 (IDEYLEKELR…NPQIEVEEIK (70 aa)) is the KH type-2 domain.

Belongs to the universal ribosomal protein uS3 family. In terms of assembly, part of the 30S ribosomal subunit.

In terms of biological role, binds the lower part of the 30S subunit head. The polypeptide is Small ribosomal subunit protein uS3 (Thermococcus gammatolerans (strain DSM 15229 / JCM 11827 / EJ3)).